We begin with the raw amino-acid sequence, 157 residues long: Crossover junction endodeoxyribonuclease RuvC (157 aa).

Residues Asp-7, Glu-67, and Asp-140 contribute to the active site. Asp-7, Glu-67, and Asp-140 together coordinate Mg(2+).

Belongs to the RuvC family. As to quaternary structure, homodimer which binds Holliday junction (HJ) DNA. The HJ becomes 2-fold symmetrical on binding to RuvC with unstacked arms; it has a different conformation from HJ DNA in complex with RuvA. In the full resolvosome a probable DNA-RuvA(4)-RuvB(12)-RuvC(2) complex forms which resolves the HJ. Mg(2+) is required as a cofactor.

The protein localises to the cytoplasm. It catalyses the reaction Endonucleolytic cleavage at a junction such as a reciprocal single-stranded crossover between two homologous DNA duplexes (Holliday junction).. Its function is as follows. The RuvA-RuvB-RuvC complex processes Holliday junction (HJ) DNA during genetic recombination and DNA repair. Endonuclease that resolves HJ intermediates. Cleaves cruciform DNA by making single-stranded nicks across the HJ at symmetrical positions within the homologous arms, yielding a 5'-phosphate and a 3'-hydroxyl group; requires a central core of homology in the junction. The consensus cleavage sequence is 5'-(A/T)TT(C/G)-3'. Cleavage occurs on the 3'-side of the TT dinucleotide at the point of strand exchange. HJ branch migration catalyzed by RuvA-RuvB allows RuvC to scan DNA until it finds its consensus sequence, where it cleaves and resolves the cruciform DNA. This Rickettsia conorii (strain ATCC VR-613 / Malish 7) protein is Crossover junction endodeoxyribonuclease RuvC.